The chain runs to 310 residues: MNKPLPKAIFLMGPTASGKTNLAIELRKRFPVELISVDSALIYKGMDIGTAKPNAEELLQAPHRLIDILDPTESYSAADFRRDALKEMDDIVAQGKIPLLVGGTMLYYKALLEGLSPLPAADADIRAQIEQEAEQFGWEAMHDQLKTIDPVSAERIHPNDPQRLSRALEVFRISGKTLTELTQIKGDALPYEVHQFAIAPKERAEIHRRIELRFANMMEEGFEAEARALYERDDLHADLPSIRCVGYRQMWDYFDGEGTLDEAVFRGICATRQLAKRQITWLRSWKELTWLDSDDIDGALELISTQLEKK.

ATP is bound at residue 13-20 (GPTASGKT). A substrate-binding site is contributed by 15–20 (TASGKT). Interaction with substrate tRNA stretches follow at residues 38 to 41 (DSAL), 162 to 166 (QRLSR), 243 to 248 (RCVGYR), and 276 to 283 (KRQITWLR).

Belongs to the IPP transferase family. Monomer. The cofactor is Mg(2+).

It catalyses the reaction adenosine(37) in tRNA + dimethylallyl diphosphate = N(6)-dimethylallyladenosine(37) in tRNA + diphosphate. Its function is as follows. Catalyzes the transfer of a dimethylallyl group onto the adenine at position 37 in tRNAs that read codons beginning with uridine, leading to the formation of N6-(dimethylallyl)adenosine (i(6)A). This chain is tRNA dimethylallyltransferase, found in Aliivibrio fischeri (strain ATCC 700601 / ES114) (Vibrio fischeri).